A 431-amino-acid polypeptide reads, in one-letter code: Serine hydroxymethyltransferase (431 aa).

Residues Leu-126 and 130 to 132 (GHL) each bind (6S)-5,6,7,8-tetrahydrofolate. An N6-(pyridoxal phosphate)lysine modification is found at Lys-235.

The protein belongs to the SHMT family. In terms of assembly, homodimer. Pyridoxal 5'-phosphate serves as cofactor.

The protein localises to the cytoplasm. It carries out the reaction (6R)-5,10-methylene-5,6,7,8-tetrahydrofolate + glycine + H2O = (6S)-5,6,7,8-tetrahydrofolate + L-serine. Its pathway is one-carbon metabolism; tetrahydrofolate interconversion. The protein operates within amino-acid biosynthesis; glycine biosynthesis; glycine from L-serine: step 1/1. Its function is as follows. Catalyzes the reversible interconversion of serine and glycine with tetrahydrofolate (THF) serving as the one-carbon carrier. This reaction serves as the major source of one-carbon groups required for the biosynthesis of purines, thymidylate, methionine, and other important biomolecules. Also exhibits THF-independent aldolase activity toward beta-hydroxyamino acids, producing glycine and aldehydes, via a retro-aldol mechanism. This Nocardia farcinica (strain IFM 10152) protein is Serine hydroxymethyltransferase.